The following is a 1597-amino-acid chain: Collagen alpha-1(XVII) chain (1597 aa).

Disordered stretches follow at residues 1-155 (MDVT…PSTR) and 168-188 (GSRSASVSPTRNSSNTLPIPK). The Cytoplasmic segment spans residues 1-468 (MDVTKKNKRD…CGSCCSWWKW (468 aa)). Residues 1 to 567 (MDVTKKNKRD…AEQENGNLRG (567 aa)) are nonhelical region (NC16A). Positions 9 to 19 (RDGSEVTERII) are enriched in basic and acidic residues. Polar residues-rich tracts occupy residues 58–96 (THGSSGYINSSGSTRGNASTSSYRRAHSPASTLPNSPGS), 111–120 (EGSSSGNSSP), and 170–184 (RSASVSPTRNSSNTL). Positions 146–231 (RLQSASPSTR…WSSTLPAGSS (86 aa)) are necessary for interaction with DST and for the recruitment of DST to hemidesmosome. Residues 469-489 (LLGLLLTWLLLLGLLFGLIAL) form a helical; Signal-anchor for type II membrane protein membrane-spanning segment. Residues 490 to 1597 (AEEVRALKAR…KGGSWRLTSY (1108 aa)) are Extracellular-facing. 5 disordered regions span residues 562–857 (NGNL…SSSS), 907–927 (LRGPPGPPGPPGPPDLPFRVR), 970–1041 (LETY…ISSS), 1289–1316 (TAGVSSIPGPPGPPGPPGPRGPPGVSGA), and 1344–1394 (FIVG…SSMG). The tract at residues 568–1572 (SPGPKGDMGS…ELPLEEQPLA (1005 aa)) is triple-helical region. Low complexity predominate over residues 604–632 (PKGQKGSVGEPGMEGPMGQRGREGPMGPR). Positions 665 to 674 (GPKGSGGSPG) are enriched in gly residues. 2 stretches are compositionally biased toward low complexity: residues 730–748 (PGAVGEPGAKGAVGPAGPD) and 774–796 (DPGKPGFTGPQGPQGLPGTPGRP). Over residues 820–838 (PGPPGPPGAMGPPGPPGAP) the composition is skewed to pro residues. Over residues 847 to 857 (AGESFMGSSSS) the composition is skewed to low complexity. Composition is skewed to pro residues over residues 910–922 (PPGPPGPPGPPDL), 977–986 (PPGPPGPPGP), 1023–1035 (PGPPGPPGPPGPP), 1296–1310 (PGPPGPPGPPGPRGP), and 1348–1357 (PPGPPGPQGP). Residues 1377–1393 (SSHSASVSRGSSYSSSM) are compositionally biased toward low complexity. Asn-1493 carries an N-linked (GlcNAc...) asparagine glycan. Residues 1531–1566 (GHPALEGTREKKETKVTKSMRGGEREASPSSHELPL) are disordered. Residues 1537–1557 (GTREKKETKVTKSMRGGEREA) show a composition bias toward basic and acidic residues. The interval 1573 to 1597 (SVLAMAYGVHVKISPKGGSWRLTSY) is nonhelical region (NC1).

Homotrimers of alpha 1(XVII)chains. Interacts (via cytoplasmic region) with ITGB4 (via cytoplasmic region). Interacts (via cytoplasmic region) with DST (via N-terminus). Interacts (via N-terminus) with PLEC. Interacts (via cytoplasmic region) with DSP. Post-translationally, the intracellular/endo domain is disulfide-linked. In terms of processing, prolines at the third position of the tripeptide repeating unit (G-X-Y) are hydroxylated in some or all of the chains. The ectodomain is shedded from the surface of keratinocytes resulting in a 120-kDa soluble form, also named as 120 kDa linear IgA disease antigen homolog. The shedding is mediated by membrane-bound metalloproteases. Upper lamina lucidalhemidesmosome.

Its subcellular location is the cell junction. The protein resides in the hemidesmosome. The protein localises to the membrane. It localises to the secreted. It is found in the extracellular space. Its subcellular location is the extracellular matrix. The protein resides in the basement membrane. Its function is as follows. The 120 kDa linear IgA disease antigen homolog is an anchoring filament component involved in dermal-epidermal cohesion. The chain is Collagen alpha-1(XVII) chain (COL17A1) from Canis lupus familiaris (Dog).